A 321-amino-acid polypeptide reads, in one-letter code: NADPH-dependent codeinone reductase 1-3 (321 aa).

Thr-27 and Asp-51 together coordinate NADPH. Catalysis depends on proton donor residues Tyr-56 and His-119. His-119 is a substrate binding site. NADPH contacts are provided by Gln-187, Ser-214, Leu-216, Ser-264, and Arg-269. Positions 300-321 are disordered; it reads ADFLLSPTGPFKTEEEFWDEKD.

It belongs to the aldo/keto reductase family. As to expression, latex secreting cells (laticifer cells). Expressed constitutively in all organs with highest levels in capsules. Restricted to the parietal region of sieve elements adjacent or proximal to laticifers in roots, stems, leaves and carpels.

The protein localises to the cytoplasm. It localises to the cytosol. The enzyme catalyses codeine + NADP(+) = codeinone + NADPH + H(+). The catalysed reaction is neopine + NADP(+) = neopinone + NADPH + H(+). It carries out the reaction morphine + NADP(+) = morphinone + NADPH + H(+). It catalyses the reaction neomorphine + NADP(+) = neomorphinone + NADPH + H(+). Its pathway is alkaloid biosynthesis; morphine biosynthesis. Functionally, NADPH-dependent codeinone reductase involved in biosynthesis of morphinan-type benzylisoquinoline and opiate alkaloids natural products. Reduces codeinone to codeine in the penultimate step in morphine biosynthesis. Can use morphinone, hydrocodone and hydromorphone as substrate during reductive reaction with NADPH as cofactor, and morphine and dihydrocodeine as substrate during oxidative reaction with NADP as cofactor. Converts morphinone to morphine, and neomorphinone to neomorphine. Reduces irreversibly neopinone, a spontaneous isomer of codeinone, to neopine; in planta, neopine levels are limited to low levels. The chain is NADPH-dependent codeinone reductase 1-3 from Papaver somniferum (Opium poppy).